The sequence spans 396 residues: Inositol polyphosphate multikinase (396 aa).

Residues 1–13 are compositionally biased toward low complexity; it reads MAAEPPALRLRPP. Positions 1 to 22 are disordered; that stretch reads MAAEPPALRLRPPGSTGDSPPV. Alanine 2 is modified (N-acetylalanine). Serine 19 carries the phosphoserine modification. Lysine 58 lines the ATP pocket. Position 65 (arginine 65) interacts with substrate. Residues 114–116 and aspartate 127 contribute to the ATP site; that span reads EDV. Residues lysine 129, 143–150, and glutamine 179 contribute to the substrate site; that span reads KIQQQVSK. A Nuclear localization signal motif is present at residues 300–310; it reads RHRKLYAKKHQ. Residue aspartate 365 participates in ATP binding.

This sequence belongs to the inositol phosphokinase (IPK) family. The cofactor is Mg(2+).

The protein localises to the nucleus. The enzyme catalyses 1D-myo-inositol 1,4,5-trisphosphate + 2 ATP = 1D-myo-inositol 1,3,4,5,6-pentakisphosphate + 2 ADP + 2 H(+). The catalysed reaction is 1D-myo-inositol 1,3,4,6-tetrakisphosphate + ATP = 1D-myo-inositol 1,3,4,5,6-pentakisphosphate + ADP + H(+). It carries out the reaction 1-octadecanoyl-2-(5Z,8Z,11Z,14Z)-eicosatetraenoyl-sn-glycero-3-phospho-1D-myo-inositol 4,5-bisphosphate + ATP = 1-octadecanoyl-2-(5Z,8Z,11Z,14Z-eicosatetraenoyl)-sn-glycero-3-phospho-(1D-myo-inositol 3,4,5-triphosphate) + ADP + H(+). It catalyses the reaction a 1,2-diacyl-sn-glycero-3-phospho-(1D-myo-inositol-4,5-bisphosphate) + ATP = a 1,2-diacyl-sn-glycero-3-phospho-(1D-myo-inositol-3,4,5-trisphosphate) + ADP + H(+). The enzyme catalyses 1D-myo-inositol 1,4,5,6-tetrakisphosphate + ATP = 1D-myo-inositol 1,3,4,5,6-pentakisphosphate + ADP + H(+). The protein operates within phospholipid metabolism; phosphatidylinositol metabolism. In terms of biological role, inositol phosphate kinase with a broad substrate specificity. Phosphorylates inositol 1,4,5-trisphosphate (Ins(1,4,5)P3) first to inositol 1,3,4,5-tetrakisphosphate and then to inositol 1,3,4,5,6-pentakisphosphate (Ins(1,3,4,5,6)P5). Phosphorylates inositol 1,3,4,6-tetrakisphosphate (Ins(1,3,4,6)P4). Phosphorylates inositol 1,4,5,6-tetrakisphosphate (Ins(1,4,5,6)P4). Phosphorylates glycero-3-phospho-1D-myo-inositol 4,5-bisphosphate to glycero-3-phospho-1D-myo-inositol 3,4,5-trisphosphate. Plays an important role in MLKL-mediated necroptosis via its role in the biosynthesis of inositol pentakisphosphate (InsP5) and inositol hexakisphosphate (InsP6). Binding of these highly phosphorylated inositol phosphates to MLKL mediates the release of an N-terminal auto-inhibitory region, leading to activation of the kinase. Essential for activated phospho-MLKL to oligomerize and localize to the cell membrane during necroptosis. Required for normal embryonic development, probably via its role in the biosynthesis of inositol 1,3,4,5,6-pentakisphosphate (Ins(1,3,4,5,6)P5) and inositol hexakisphosphate (InsP6). This is Inositol polyphosphate multikinase (Ipmk) from Mus musculus (Mouse).